The chain runs to 339 residues: 2-keto-3-deoxygluconate permease (339 aa).

10 consecutive transmembrane segments (helical) span residues 10 to 30 (IPGGMMLVPLFLGALCHTFAP), 42 to 62 (GLISGTVPILAVWFFCMGASI), 77 to 97 (LVVTKIAVAWVVAAVASRILP), 100 to 120 (GVEVGFFAGLSTLALVAAMDM), 141 to 161 (AFVLMSLESGPLMTMVILGTA), 163 to 183 (IASFEPHVFVGAVLPFLVGFA), 199 to 219 (VQTLIPFFAFALGNTIDLSVI), 224 to 244 (LLGVLLGISVIIITGIPLIVA), 254 to 274 (TAGIAASSSAGAAVATPVLIA), and 289 to 309 (TLVATSVIVTSVLVPIITAMW). The tract at residues 315–339 (GGDGTVPKEDAVEEKAEQQRRRIIK) is disordered. The span at 320 to 339 (VPKEDAVEEKAEQQRRRIIK) shows a compositional bias: basic and acidic residues.

It belongs to the KdgT transporter family.

The protein localises to the cell inner membrane. It catalyses the reaction 2-dehydro-3-deoxy-D-gluconate(in) + H(+)(in) = 2-dehydro-3-deoxy-D-gluconate(out) + H(+)(out). Uptake is inhibited by the protonophore uncouplers carbonyl cyanide m-chlorophenylhydrazone (CCCP) and 2,4-dinitrophenol, and by NaN(3). Functionally, catalyzes the proton-dependent uptake of 2-keto-3-deoxygluconate (KDG) into the cell. Can also mediate the uptake of glucuronate with a low affinity, and may mediate the uptake of 5-keto-4-deoxyuronate (DKI) and 2,5-diketo-3-deoxygluconate (DKII), which are intermediates in pectin degradation. In Dickeya chrysanthemi (Pectobacterium chrysanthemi), this protein is 2-keto-3-deoxygluconate permease.